Consider the following 161-residue polypeptide: Large ribosomal subunit protein uL11 (161 aa).

The protein belongs to the universal ribosomal protein uL11 family. In terms of assembly, part of the ribosomal stalk of the 50S ribosomal subunit. Interacts with L10 and the large rRNA to form the base of the stalk. L10 forms an elongated spine to which L12 dimers bind in a sequential fashion forming a multimeric L10(L12)X complex.

In terms of biological role, forms part of the ribosomal stalk which helps the ribosome interact with GTP-bound translation factors. In Methanocaldococcus jannaschii (strain ATCC 43067 / DSM 2661 / JAL-1 / JCM 10045 / NBRC 100440) (Methanococcus jannaschii), this protein is Large ribosomal subunit protein uL11.